A 485-amino-acid chain; its full sequence is N-succinylglutamate 5-semialdehyde dehydrogenase (485 aa).

220–225 (GSANTG) is an NAD(+) binding site. Active-site residues include Glu243 and Cys278.

This sequence belongs to the aldehyde dehydrogenase family. AstD subfamily.

The catalysed reaction is N-succinyl-L-glutamate 5-semialdehyde + NAD(+) + H2O = N-succinyl-L-glutamate + NADH + 2 H(+). The protein operates within amino-acid degradation; L-arginine degradation via AST pathway; L-glutamate and succinate from L-arginine: step 4/5. Functionally, catalyzes the NAD-dependent reduction of succinylglutamate semialdehyde into succinylglutamate. The chain is N-succinylglutamate 5-semialdehyde dehydrogenase from Vibrio parahaemolyticus serotype O3:K6 (strain RIMD 2210633).